The sequence spans 360 residues: Peptide chain release factor 1 (360 aa).

Gln236 carries the post-translational modification N5-methylglutamine.

It belongs to the prokaryotic/mitochondrial release factor family. In terms of processing, methylated by PrmC. Methylation increases the termination efficiency of RF1.

The protein resides in the cytoplasm. Peptide chain release factor 1 directs the termination of translation in response to the peptide chain termination codons UAG and UAA. The sequence is that of Peptide chain release factor 1 from Methylococcus capsulatus (strain ATCC 33009 / NCIMB 11132 / Bath).